Consider the following 452-residue polypeptide: 3-phosphoshikimate 1-carboxyvinyltransferase (452 aa).

A disordered region spans residues 1–23 (MLNGSASKPATARKSAGLTGSVR). Positions 28, 29, and 33 each coordinate 3-phosphoshikimate. Residue Lys-28 coordinates phosphoenolpyruvate. The phosphoenolpyruvate site is built by Gly-100 and Arg-128. Ser-173, Gln-175, Asp-326, and Lys-353 together coordinate 3-phosphoshikimate. Gln-175 serves as a coordination point for phosphoenolpyruvate. The active-site Proton acceptor is Asp-326. Phosphoenolpyruvate contacts are provided by Arg-357 and Arg-405.

The protein belongs to the EPSP synthase family. In terms of assembly, monomer.

It is found in the cytoplasm. The catalysed reaction is 3-phosphoshikimate + phosphoenolpyruvate = 5-O-(1-carboxyvinyl)-3-phosphoshikimate + phosphate. It functions in the pathway metabolic intermediate biosynthesis; chorismate biosynthesis; chorismate from D-erythrose 4-phosphate and phosphoenolpyruvate: step 6/7. Functionally, catalyzes the transfer of the enolpyruvyl moiety of phosphoenolpyruvate (PEP) to the 5-hydroxyl of shikimate-3-phosphate (S3P) to produce enolpyruvyl shikimate-3-phosphate and inorganic phosphate. This chain is 3-phosphoshikimate 1-carboxyvinyltransferase, found in Rhizobium johnstonii (strain DSM 114642 / LMG 32736 / 3841) (Rhizobium leguminosarum bv. viciae).